The primary structure comprises 118 residues: Large ribosomal subunit protein bL20 (118 aa).

Belongs to the bacterial ribosomal protein bL20 family.

Binds directly to 23S ribosomal RNA and is necessary for the in vitro assembly process of the 50S ribosomal subunit. It is not involved in the protein synthesizing functions of that subunit. The polypeptide is Large ribosomal subunit protein bL20 (Aeromonas hydrophila subsp. hydrophila (strain ATCC 7966 / DSM 30187 / BCRC 13018 / CCUG 14551 / JCM 1027 / KCTC 2358 / NCIMB 9240 / NCTC 8049)).